The chain runs to 609 residues: Arginine--tRNA ligase (609 aa).

The 'HIGH' region motif lies at Ala-132–His-142.

It belongs to the class-I aminoacyl-tRNA synthetase family. Monomer.

It localises to the cytoplasm. It catalyses the reaction tRNA(Arg) + L-arginine + ATP = L-arginyl-tRNA(Arg) + AMP + diphosphate. This is Arginine--tRNA ligase from Psychrobacter cryohalolentis (strain ATCC BAA-1226 / DSM 17306 / VKM B-2378 / K5).